Here is a 297-residue protein sequence, read N- to C-terminus: Putative S-adenosyl-L-methionine-dependent methyltransferase MSMEG_0614/MSMEI_0598 (297 aa).

S-adenosyl-L-methionine is bound by residues aspartate 125 and 154–155 (DL).

This sequence belongs to the UPF0677 family.

Its function is as follows. Exhibits S-adenosyl-L-methionine-dependent methyltransferase activity. The chain is Putative S-adenosyl-L-methionine-dependent methyltransferase MSMEG_0614/MSMEI_0598 from Mycolicibacterium smegmatis (strain ATCC 700084 / mc(2)155) (Mycobacterium smegmatis).